We begin with the raw amino-acid sequence, 874 residues long: Probable inorganic carbon transporter subunit DabA (874 aa).

Zn(2+) is bound by residues Cys-398, Asp-400, His-580, and Cys-595.

It belongs to the inorganic carbon transporter (TC 9.A.2) DabA family. Forms a complex with DabB. Zn(2+) is required as a cofactor.

It localises to the cell membrane. In terms of biological role, part of an energy-coupled inorganic carbon pump. The chain is Probable inorganic carbon transporter subunit DabA from Bacillus cereus (strain Q1).